The primary structure comprises 406 residues: Outer membrane protein assembly factor BamB (406 aa).

The N-terminal stretch at 1 to 23 is a signal peptide; it reads MMKQVDMYKRVALIALMGMSLAG. The N-palmitoyl cysteine moiety is linked to residue Cys-24. Residue Cys-24 is the site of S-diacylglycerol cysteine attachment.

This sequence belongs to the BamB family. Part of the Bam complex.

Its subcellular location is the cell outer membrane. Part of the outer membrane protein assembly complex, which is involved in assembly and insertion of beta-barrel proteins into the outer membrane. The sequence is that of Outer membrane protein assembly factor BamB from Xanthomonas campestris pv. campestris (strain ATCC 33913 / DSM 3586 / NCPPB 528 / LMG 568 / P 25).